The primary structure comprises 313 residues: N-acetyl-gamma-glutamyl-phosphate reductase (313 aa).

Residue Cys-117 is part of the active site.

The protein belongs to the NAGSA dehydrogenase family. Type 2 subfamily.

The protein resides in the cytoplasm. The catalysed reaction is N-acetyl-L-glutamate 5-semialdehyde + phosphate + NADP(+) = N-acetyl-L-glutamyl 5-phosphate + NADPH + H(+). It functions in the pathway amino-acid biosynthesis; L-arginine biosynthesis; N(2)-acetyl-L-ornithine from L-glutamate: step 3/4. Its function is as follows. Catalyzes the NADPH-dependent reduction of N-acetyl-5-glutamyl phosphate to yield N-acetyl-L-glutamate 5-semialdehyde. The chain is N-acetyl-gamma-glutamyl-phosphate reductase from Burkholderia cenocepacia (strain ATCC BAA-245 / DSM 16553 / LMG 16656 / NCTC 13227 / J2315 / CF5610) (Burkholderia cepacia (strain J2315)).